The primary structure comprises 420 residues: MKAEVIAVGSELLLGQIANTNGQFLSQQLAKAGVDVFYHSVVGDNATRLQETLEIASERSELIILTGGLGPTKDDLTKEVVASFLHKELVIDEVALEQIVSFFEKRNLPMTENNRKQALVLKEATIFQNHYGMAPGMATIHQGVTYVLLPGPPREMRPMVTEQVIPFLSSHVGDLQIISRVLRFFGIGESKLETELEDLIDGQSNPTIAPLASEGEVTLRLTVKHHDETQAALLLDETERKIRERVGHYFYGYDETSLMEKLVSCLTKTGLSLASAESLTGGLFGARITNIPGASACFLAAITTYTNDMKQSWLNVPPHVLEQHGAVSPECAIAMAQGVKKLTKADVTISFTGVAGPSPSEGKEPGTVFIGLCFRDDEPEAITLQLSGSREQIRERTLKHGCQQILNRIKRWNERSNDKV.

It belongs to the CinA family.

The chain is Putative competence-damage inducible protein from Halalkalibacterium halodurans (strain ATCC BAA-125 / DSM 18197 / FERM 7344 / JCM 9153 / C-125) (Bacillus halodurans).